The chain runs to 302 residues: MSSSQFKQLEKLGNGTYATVYKGLNKSTGVYVALKEVKLDSEEGTPSTAIREISLMKELKHDNIVRLYDVIHTENKLTLVFEYMDNDLKKYMDSRTVGNAPRGLEMNLVKYFQWQLLEGLAFCHENKILHRDLKPQNLLITKRGQLKLGDFGLARAFGIPVNTFSSEVVTLWYRAPDVLMGSRTYSTSIDIWSCGCILAEMITGKPLFPGTNDEEQLKLIFDKMGTPNETTWPGVTSLPKYNPNFQQRLPKDLKAELQPYVKEPLDDNVIDLLHGLLQLNPDMRLSAKQALLHPWFSEYYES.

Positions 6–296 (FKQLEKLGNG…AKQALLHPWF (291 aa)) constitute a Protein kinase domain. ATP-binding positions include 12–20 (LGNGTYATV) and lysine 35. Aspartate 132 serves as the catalytic Proton acceptor.

This sequence belongs to the protein kinase superfamily. CMGC Ser/Thr protein kinase family. CDC2/CDKX subfamily. In terms of assembly, interacts with a number of cyclins.

The enzyme catalyses L-seryl-[protein] + ATP = O-phospho-L-seryl-[protein] + ADP + H(+). It catalyses the reaction L-threonyl-[protein] + ATP = O-phospho-L-threonyl-[protein] + ADP + H(+). Functionally, when phosphate concentrations are high it phosphorylates the PHO4 transcription factor thus establishing repression. In Candida glabrata (strain ATCC 2001 / BCRC 20586 / JCM 3761 / NBRC 0622 / NRRL Y-65 / CBS 138) (Yeast), this protein is Negative regulator of the PHO system (PHO85).